We begin with the raw amino-acid sequence, 463 residues long: Glutamyl-tRNA reductase (463 aa).

Substrate is bound by residues 49 to 52, serine 109, 114 to 116, and glutamine 120; these read TCNR and EQQ. Catalysis depends on cysteine 50, which acts as the Nucleophile. 196 to 201 lines the NADP(+) pocket; it reads GAGAMS.

The protein belongs to the glutamyl-tRNA reductase family. Homodimer.

The enzyme catalyses (S)-4-amino-5-oxopentanoate + tRNA(Glu) + NADP(+) = L-glutamyl-tRNA(Glu) + NADPH + H(+). Its pathway is porphyrin-containing compound metabolism; protoporphyrin-IX biosynthesis; 5-aminolevulinate from L-glutamyl-tRNA(Glu): step 1/2. Functionally, catalyzes the NADPH-dependent reduction of glutamyl-tRNA(Glu) to glutamate 1-semialdehyde (GSA). This Corynebacterium glutamicum (strain R) protein is Glutamyl-tRNA reductase.